The chain runs to 583 residues: Moesin/ezrin/radixin homolog 1 (583 aa).

One can recognise an FERM domain in the interval 11 to 301; the sequence is MNVRVTTMDA…GNHELYMRRR (291 aa). 2 disordered regions span residues 466–518 and 539–558; these read TTTP…RTLA and RDDTMETANDKIHRENVRQG. Residues 476–485 are compositionally biased toward acidic residues; sequence EEEEDNEEEL. Residues 496 to 518 are compositionally biased toward basic and acidic residues; that stretch reads DYSKDFDTDEHIKDPVEERRTLA. At Thr-564 the chain carries Phosphothreonine.

As to quaternary structure, interacts with cytoskeletal actin.

Its subcellular location is the cell junction. The protein localises to the adherens junction. The protein resides in the cell projection. It is found in the microvillus. It localises to the rhabdomere. Its subcellular location is the cell membrane. The protein localises to the cytoplasm. The protein resides in the cytoskeleton. Functionally, involved in connections of major cytoskeletal structures to the plasma membrane. This chain is Moesin/ezrin/radixin homolog 1, found in Aedes aegypti (Yellowfever mosquito).